Consider the following 81-residue polypeptide: CLAVATA3/ESR (CLE)-related protein 6 (81 aa).

A signal peptide spans 1 to 26; that stretch reads MANLILKQSLIILLIIYSTPILSSQA. Pro-73 and Pro-76 each carry hydroxyproline. O-linked (Ara...) hydroxyproline glycosylation occurs at Pro-76.

The protein belongs to the CLV3/ESR signal peptide family. Post-translationally, the O-glycosylation (arabinosylation) of the hydroxyproline Pro-76 enhances binding affinity of the CLE6p peptide for its receptor. Mostly expressed in roots, seedlings, stems and flowers, and, to a lower extent, in apex and siliques.

Its subcellular location is the secreted. It is found in the extracellular space. In terms of biological role, extracellular signal peptide that regulates cell fate. The sequence is that of CLAVATA3/ESR (CLE)-related protein 6 from Arabidopsis thaliana (Mouse-ear cress).